Reading from the N-terminus, the 364-residue chain is Aminomethyltransferase (364 aa).

The protein belongs to the GcvT family. As to quaternary structure, the glycine cleavage system is composed of four proteins: P, T, L and H.

It carries out the reaction N(6)-[(R)-S(8)-aminomethyldihydrolipoyl]-L-lysyl-[protein] + (6S)-5,6,7,8-tetrahydrofolate = N(6)-[(R)-dihydrolipoyl]-L-lysyl-[protein] + (6R)-5,10-methylene-5,6,7,8-tetrahydrofolate + NH4(+). Its function is as follows. The glycine cleavage system catalyzes the degradation of glycine. The protein is Aminomethyltransferase of Escherichia coli (strain 55989 / EAEC).